We begin with the raw amino-acid sequence, 359 residues long: Phosphoserine aminotransferase (359 aa).

Arg-41 contributes to the L-glutamate binding site. Residues 75–76, Trp-101, Thr-152, Asp-171, and Gln-194 contribute to the pyridoxal 5'-phosphate site; that span reads AS. Lys-195 bears the N6-(pyridoxal phosphate)lysine mark. Residue 236 to 237 coordinates pyridoxal 5'-phosphate; it reads NT.

This sequence belongs to the class-V pyridoxal-phosphate-dependent aminotransferase family. SerC subfamily. In terms of assembly, homodimer. Pyridoxal 5'-phosphate serves as cofactor.

Its subcellular location is the cytoplasm. The enzyme catalyses O-phospho-L-serine + 2-oxoglutarate = 3-phosphooxypyruvate + L-glutamate. It carries out the reaction 4-(phosphooxy)-L-threonine + 2-oxoglutarate = (R)-3-hydroxy-2-oxo-4-phosphooxybutanoate + L-glutamate. Its pathway is amino-acid biosynthesis; L-serine biosynthesis; L-serine from 3-phospho-D-glycerate: step 2/3. It functions in the pathway cofactor biosynthesis; pyridoxine 5'-phosphate biosynthesis; pyridoxine 5'-phosphate from D-erythrose 4-phosphate: step 3/5. Catalyzes the reversible conversion of 3-phosphohydroxypyruvate to phosphoserine and of 3-hydroxy-2-oxo-4-phosphonooxybutanoate to phosphohydroxythreonine. This Acinetobacter baumannii (strain AB307-0294) protein is Phosphoserine aminotransferase.